The primary structure comprises 538 residues: MEATMDQTQPLNEKQVPNSEGCYVWQVSDMNRLRRFLCFGSEGGTYYIEEKKLGQENAEALLRLIEDGKGCEVVQEIKTFSQEGRAAKQEPTLFALAVCSQCSDIKTKQAAFRAVPEVCRIPTHLFTFIQFKKDLKEGMKCGMWGRALRKAVSDWYNTKDALNLAMAVTKYKQRNGWSHKDLLRLSHIKPANEGLTMVAKYVSKGWKEVQEAYKEKELSPETEKVLKYLEATERVKRTKDELEIIHLIDEYRLVREHLLTIHLKSKEIWKSLLQDMPLTALLRNLGKMTADSVLAPASSEVSSVCERLTNEKLLKKARIHPFHILVALETYKKGHGNRGKLRWIPDTSIVEALDNAFYKSFKLVEPTGKRFLLAIDVSASMNQRVLGSILNASVVAAAMCMLVARTEKDSHMVAFSDEMLPCPITVNMLLHEVVEKMSDITMGSTDCALPMLWAQKTNTAADIFIVFTDCETNVEDVHPATALKQYREKMGIPAKLIVCAMTSNGFSIADPDDRGMLDICGFDSGALDVIRNFTLDLI.

The region spanning 16-369 is the TROVE domain; the sequence is VPNSEGCYVW…SFKLVEPTGK (354 aa). The interval 120 to 284 is RNA-binding; it reads RIPTHLFTFI…DMPLTALLRN (165 aa). The tract at residues 361 to 538 is VWFA-like domain; that stretch reads FKLVEPTGKR…VIRNFTLDLI (178 aa). Positions 378, 380, and 445 each coordinate a divalent metal cation.

The protein belongs to the Ro 60 kDa family.

It is found in the cytoplasm. Its function is as follows. RNA-binding protein that binds to misfolded non-coding RNAs, pre-5S rRNA, and several small cytoplasmic RNA molecules known as Y RNAs. May play roles in cilia formation and/or maintenance. This Xenopus laevis (African clawed frog) protein is RNA-binding protein RO60.